Consider the following 237-residue polypeptide: Ribonuclease 3 (237 aa).

In terms of domain architecture, RNase III spans 8 to 134; it reads RSALLEKLGV…VIGAVYLDAG (127 aa). E47 lines the Mg(2+) pocket. Residue D51 is part of the active site. 2 residues coordinate Mg(2+): D120 and E123. E123 is a catalytic residue. Residues 161–229 form the DRBM domain; it reads DPKTSLQEAA…ALSAWTALTN (69 aa).

Belongs to the ribonuclease III family. Homodimer. The cofactor is Mg(2+).

It is found in the cytoplasm. The enzyme catalyses Endonucleolytic cleavage to 5'-phosphomonoester.. Digests double-stranded RNA. Involved in the processing of primary rRNA transcript to yield the immediate precursors to the large and small rRNAs (23S and 16S). Processes some mRNAs, and tRNAs when they are encoded in the rRNA operon. Processes pre-crRNA and tracrRNA of type II CRISPR loci if present in the organism. The polypeptide is Ribonuclease 3 (Leifsonia xyli subsp. xyli (strain CTCB07)).